The following is a 952-amino-acid chain: Lysosomal alpha-glucosidase (952 aa).

Residues 1–27 form the signal peptide; it reads MGVRHPPCSHRLLAVCALVSLATAALL. The propeptide occupies 28 to 69; sequence GHILLHDFLLVPRELSGSSPVLEETHPAHQQGASRPGPRDAQ. The tract at residues 47–82 is disordered; it reads PVLEETHPAHQQGASRPGPRDAQAHPGRPRAVPTQC. Residues 80 to 131 form the P-type domain; the sequence is TQCDVPPNSRFDCAPDKAITQEQCEARGCCYIPAKQGLQGAQMGQPWCFFPP. Cystine bridges form between cysteine 82-cysteine 109, cysteine 92-cysteine 108, and cysteine 103-cysteine 127. 3 N-linked (GlcNAc...) asparagine glycosylation sites follow: asparagine 140, asparagine 233, and asparagine 390. Aspartate 404 contacts substrate. N-linked (GlcNAc...) asparagine glycosylation occurs at asparagine 470. Aspartate 518 acts as the Nucleophile in catalysis. Glutamate 521 is a catalytic residue. An intrachain disulfide couples cysteine 533 to cysteine 558. 2 residues coordinate substrate: arginine 600 and aspartate 616. Cysteines 647 and 658 form a disulfide. Asparagine 652 carries N-linked (GlcNAc...) asparagine glycosylation. Histidine 674 is a binding site for substrate. N-linked (GlcNAc...) asparagine glycans are attached at residues asparagine 882 and asparagine 925.

Belongs to the glycosyl hydrolase 31 family. The different forms of acid glucosidase are obtained by proteolytic processing. Post-translationally, phosphorylation of mannose residues ensures efficient transport of the enzyme to the lysosomes via the mannose 6-phosphate receptor.

The protein localises to the lysosome. Its subcellular location is the lysosome membrane. It catalyses the reaction Hydrolysis of terminal, non-reducing (1-&gt;4)-linked alpha-D-glucose residues with release of alpha-D-glucose.. Essential for the degradation of glycogen in lysosomes. Has highest activity on alpha-1,4-linked glycosidic linkages, but can also hydrolyze alpha-1,6-linked glucans. The protein is Lysosomal alpha-glucosidase (GAA) of Homo sapiens (Human).